The following is a 409-amino-acid chain: Argininosuccinate synthase (409 aa).

ATP-binding positions include 11–19 and alanine 38; that span reads AYSGGLDTS. L-citrulline-binding residues include tyrosine 91 and serine 96. Glycine 121 is a binding site for ATP. L-aspartate contacts are provided by threonine 123, asparagine 127, and aspartate 128. Position 127 (asparagine 127) interacts with L-citrulline. Positions 131, 182, 191, 267, and 279 each coordinate L-citrulline.

This sequence belongs to the argininosuccinate synthase family. Type 1 subfamily. As to quaternary structure, homotetramer.

It is found in the cytoplasm. The catalysed reaction is L-citrulline + L-aspartate + ATP = 2-(N(omega)-L-arginino)succinate + AMP + diphosphate + H(+). It functions in the pathway amino-acid biosynthesis; L-arginine biosynthesis; L-arginine from L-ornithine and carbamoyl phosphate: step 2/3. This chain is Argininosuccinate synthase, found in Nitrobacter hamburgensis (strain DSM 10229 / NCIMB 13809 / X14).